Consider the following 221-residue polypeptide: Ribonuclease T (221 aa).

In terms of domain architecture, Exonuclease spans 20-194 (VVIDVETAGF…YDTERTAELF (175 aa)). Residues aspartate 23, glutamate 25, histidine 181, and aspartate 186 each contribute to the Mg(2+) site. Residue histidine 181 is the Proton donor/acceptor of the active site.

This sequence belongs to the RNase T family. In terms of assembly, homodimer. The cofactor is Mg(2+).

Trims short 3' overhangs of a variety of RNA species, leaving a one or two nucleotide 3' overhang. Responsible for the end-turnover of tRNA: specifically removes the terminal AMP residue from uncharged tRNA (tRNA-C-C-A). Also appears to be involved in tRNA biosynthesis. In Shewanella frigidimarina (strain NCIMB 400), this protein is Ribonuclease T.